Reading from the N-terminus, the 557-residue chain is Organic cation/carnitine transporter 2 (557 aa).

Residues 1 to 20 are Cytoplasmic-facing; the sequence is MRDYDEVTAFLGEWGPFQRL. A helical transmembrane segment spans residues 21 to 41; it reads IFFLLSASIIPNGFNGMSIVF. Over 42–142 the chain is Extracellular; that stretch reads LAGTPEHRCL…DLVCKDDWKA (101 aa). N-linked (GlcNAc...) asparagine glycosylation is found at Asn57, Asn64, and Asn91. A helical membrane pass occupies residues 143 to 163; the sequence is PLTTSLFFVGVLMGSFISGQL. Residues 164-172 are Cytoplasmic-facing; the sequence is SDRFGRKNV. Residues 173–193 form a helical membrane-spanning segment; it reads LFLTMGMQTGFSFLQVFSVNF. Over 194 to 197 the chain is Extracellular; that stretch reads EMFT. The chain crosses the membrane as a helical span at residues 198 to 218; it reads VLFVLVGMGQISNYVAAFVLG. An ATP-binding site is contributed by 218–225; it reads GTEILSKS. The Cytoplasmic portion of the chain corresponds to 219–232; it reads TEILSKSIRIIFAT. A helical membrane pass occupies residues 233-253; the sequence is LGVCIFYAFGFMVLPLFAYFI. Residues 254-257 are Extracellular-facing; it reads RDWR. Residues 258–278 traverse the membrane as a helical segment; that stretch reads MLLLALTVPGVLCGALWWFIP. The Cytoplasmic segment spans residues 279–341; the sequence is ESPRWLISQG…YDLIRTRNIR (63 aa). Residues 342–362 traverse the membrane as a helical segment; sequence VITIMSIILWLTISVGYFGLS. Topologically, residues 363 to 373 are extracellular; the sequence is LDTPNLHGDIY. A helical transmembrane segment spans residues 374 to 394; the sequence is VNCFLLAAVEVPAYVLAWLLL. Residues 395–406 lie on the Cytoplasmic side of the membrane; sequence QYLPRRYSISAA. A helical membrane pass occupies residues 407 to 427; sequence LFLGGSVLLFMQLVPSELFYL. Residues 428 to 430 lie on the Extracellular side of the membrane; sequence STA. A helical membrane pass occupies residues 431–451; that stretch reads LVMVGKFGITSAYSMVYVYTA. Residues 452–462 are Cytoplasmic-facing; sequence ELYPTVVRNMG. A helical transmembrane segment spans residues 463–483; it reads VGVSSTASRLGSILSPYFVYL. Residues 484-488 lie on the Extracellular side of the membrane; the sequence is GAYDR. Phosphotyrosine is present on Tyr486. The chain crosses the membrane as a helical span at residues 489-509; sequence FLPYILMGSLTILTAILTLFF. Topologically, residues 510 to 557 are cytoplasmic; the sequence is PESFGVPLPDTIDQMLRVKGIKQWQIQSQTRMQKDGEESPTVLKSTAF. Ser548 is modified (phosphoserine). The residue at position 550 (Thr550) is a Phosphothreonine.

The protein belongs to the major facilitator (TC 2.A.1) superfamily. Organic cation transporter (TC 2.A.1.19) family. As to quaternary structure, interacts with PDZK1. As to expression, widely expressed. Expressed in kidney, liver and testis. Expressed at the brush border of the small, large intestine and colon (at protein level).

It is found in the apical cell membrane. Its subcellular location is the basal cell membrane. The protein localises to the cell membrane. The enzyme catalyses (R)-carnitine(out) + Na(+)(out) = (R)-carnitine(in) + Na(+)(in). It catalyses the reaction glycine betaine(out) + Na(+)(out) = glycine betaine(in) + Na(+)(in). It carries out the reaction glycine betaine(out) + (R)-carnitine(in) = glycine betaine(in) + (R)-carnitine(out). The catalysed reaction is O-butanoyl-(R)-carnitine(out) + Na(+)(out) = O-butanoyl-(R)-carnitine(in) + Na(+)(in). The enzyme catalyses O-acetyl-(R)-carnitine(out) + Na(+)(out) = O-acetyl-(R)-carnitine(in) + Na(+)(in). It catalyses the reaction O-propanoyl-(R)-carnitine(out) + Na(+)(out) = O-propanoyl-(R)-carnitine(in) + Na(+)(in). It carries out the reaction (S)-carnitine(out) + Na(+)(out) = (S)-carnitine(in) + Na(+)(in). The catalysed reaction is an O-acyl-(R)-carnitine(out) + Na(+)(out) = an O-acyl-(R)-carnitine(in) + Na(+)(in). The enzyme catalyses L-glutamyl-L-arginyl-glycyl-L-methionyl-L-threonine(out) + Na(+)(out) = L-glutamyl-L-arginyl-glycyl-L-methionyl-L-threonine(in) + Na(+)(in). It catalyses the reaction N,N-dimethylglycine(out) + Na(+)(out) = N,N-dimethylglycine(in) + Na(+)(in). With respect to regulation, inhibited by emetine, quinidine and verapamil. The IC(50) of emetine is 4.2 uM. Not inhibited by valproic acid. Transport of (R)-carnitine is stimulated by cholesterol in the plasma membrane. In terms of biological role, sodium-ion dependent, high affinity carnitine transporter. Involved in the active cellular uptake of carnitine. Transports one sodium ion with one molecule of carnitine. Also transports organic cations such as tetraethylammonium (TEA) without the involvement of sodium. Also relative uptake activity ratio of carnitine to TEA is 11.3. May also contribute to regulate the transport of organic compounds in testis across the blood-testis-barrier. This Mus musculus (Mouse) protein is Organic cation/carnitine transporter 2.